We begin with the raw amino-acid sequence, 673 residues long: Mechanosensitive ion channel protein 2, chloroplastic (673 aa).

Residues 1-75 (MALYGTLQLS…SVPCRTTAFR (75 aa)) constitute a chloroplast transit peptide. The next 5 membrane-spanning stretches (helical) occupy residues 107-127 (FPFVYKLVPAVALLVFSLWGL), 152-172 (YHVMTSYVQPLLLWLGALFIC), 193-213 (LNFVRSLSTVLAFAYCLSSLI), 240-260 (ALYSAVWVAAVSLFMELLGFS), and 264-284 (WLTAGGLGTVLITLAGREILT). The interval 492–673 (KINGEDKSKS…QPNSGASTEP (182 aa)) is disordered. Basic and acidic residues-rich tracts occupy residues 510-525 (AEQENKGSNPKSKETS), 564-576 (TPKDTETSGTEKP), and 617-642 (GSKRTLPIEEEIHSPPMETDAKELTG). Serine 571 is subject to Phosphoserine. Over residues 661-673 (SQSQPNSGASTEP) the composition is skewed to polar residues.

This sequence belongs to the MscS (TC 1.A.23) family. Widely expressed.

It is found in the plastid. The protein localises to the chloroplast membrane. Functionally, mechanosensitive channel that opens in response to stretch forces in the membrane lipid bilayer. Controls plastid size, shape, and perhaps division during normal plant development by altering ion flux in response to changes in membrane tension. Acts as a component of the chloroplast division machinery. The sequence is that of Mechanosensitive ion channel protein 2, chloroplastic (MSL2) from Arabidopsis thaliana (Mouse-ear cress).